The primary structure comprises 475 residues: Aspartyl/glutamyl-tRNA(Asn/Gln) amidotransferase subunit B (475 aa).

It belongs to the GatB/GatE family. GatB subfamily. Heterotrimer of A, B and C subunits.

It catalyses the reaction L-glutamyl-tRNA(Gln) + L-glutamine + ATP + H2O = L-glutaminyl-tRNA(Gln) + L-glutamate + ADP + phosphate + H(+). The enzyme catalyses L-aspartyl-tRNA(Asn) + L-glutamine + ATP + H2O = L-asparaginyl-tRNA(Asn) + L-glutamate + ADP + phosphate + 2 H(+). Allows the formation of correctly charged Asn-tRNA(Asn) or Gln-tRNA(Gln) through the transamidation of misacylated Asp-tRNA(Asn) or Glu-tRNA(Gln) in organisms which lack either or both of asparaginyl-tRNA or glutaminyl-tRNA synthetases. The reaction takes place in the presence of glutamine and ATP through an activated phospho-Asp-tRNA(Asn) or phospho-Glu-tRNA(Gln). This is Aspartyl/glutamyl-tRNA(Asn/Gln) amidotransferase subunit B from Pediococcus pentosaceus (strain ATCC 25745 / CCUG 21536 / LMG 10740 / 183-1w).